Reading from the N-terminus, the 146-residue chain is Protein SprT-like (146 aa).

The SprT-like domain occupies 4–142 (NEYVKQVSLE…GRCKGKLRLL (139 aa)). His64 lines the Zn(2+) pocket. The active site involves Glu65. His68 is a binding site for Zn(2+).

This sequence belongs to the SprT family. Zn(2+) is required as a cofactor.

The protein resides in the cytoplasm. This chain is Protein SprT-like, found in Streptococcus gordonii (strain Challis / ATCC 35105 / BCRC 15272 / CH1 / DL1 / V288).